A 356-amino-acid polypeptide reads, in one-letter code: Uroporphyrinogen decarboxylase (356 aa).

Substrate is bound by residues 23 to 27 (RQAGR), Asp-72, Tyr-148, Ser-203, and His-321.

It belongs to the uroporphyrinogen decarboxylase family. In terms of assembly, homodimer.

Its subcellular location is the cytoplasm. The enzyme catalyses uroporphyrinogen III + 4 H(+) = coproporphyrinogen III + 4 CO2. Its pathway is porphyrin-containing compound metabolism; protoporphyrin-IX biosynthesis; coproporphyrinogen-III from 5-aminolevulinate: step 4/4. Functionally, catalyzes the decarboxylation of four acetate groups of uroporphyrinogen-III to yield coproporphyrinogen-III. This Chloroflexus aggregans (strain MD-66 / DSM 9485) protein is Uroporphyrinogen decarboxylase.